Consider the following 397-residue polypeptide: Elongation factor Tu 1 (397 aa).

A tr-type G domain is found at 10-206 (KPHVNIGTIG…AVDENIPQPE (197 aa)). The segment at 19–26 (GHIDHGKT) is G1. GTP is bound at residue 19–26 (GHIDHGKT). Thr26 is a Mg(2+) binding site. The tract at residues 62–66 (GITIS) is G2. The interval 83-86 (DCPG) is G3. GTP is bound by residues 83–87 (DCPGH) and 138–141 (NKAD). The segment at 138 to 141 (NKAD) is G4. The interval 176–178 (SAL) is G5.

Belongs to the TRAFAC class translation factor GTPase superfamily. Classic translation factor GTPase family. EF-Tu/EF-1A subfamily. Monomer.

Its subcellular location is the cytoplasm. The enzyme catalyses GTP + H2O = GDP + phosphate + H(+). Functionally, GTP hydrolase that promotes the GTP-dependent binding of aminoacyl-tRNA to the A-site of ribosomes during protein biosynthesis. This is Elongation factor Tu 1 from Streptomyces avermitilis (strain ATCC 31267 / DSM 46492 / JCM 5070 / NBRC 14893 / NCIMB 12804 / NRRL 8165 / MA-4680).